We begin with the raw amino-acid sequence, 293 residues long: Undecaprenyl-diphosphatase (293 aa).

8 helical membrane passes run 3 to 23 (IALA…EFLP), 43 to 63 (KGKI…CWEF), 85 to 105 (VNVI…GKWI), 109 to 129 (LFNP…ILLA), 178 to 198 (FALV…MLFG), 203 to 223 (VATE…TVYE), 238 to 258 (IFAV…RWLL), and 269 to 289 (FAWY…TGVI).

It belongs to the UppP family.

It localises to the cell inner membrane. It catalyses the reaction di-trans,octa-cis-undecaprenyl diphosphate + H2O = di-trans,octa-cis-undecaprenyl phosphate + phosphate + H(+). Its function is as follows. Catalyzes the dephosphorylation of undecaprenyl diphosphate (UPP). Confers resistance to bacitracin. This Cupriavidus metallidurans (strain ATCC 43123 / DSM 2839 / NBRC 102507 / CH34) (Ralstonia metallidurans) protein is Undecaprenyl-diphosphatase.